The primary structure comprises 196 residues: Probable signal peptidase I-1 (196 aa).

The Cytoplasmic portion of the chain corresponds to 1-16; the sequence is MQNSPIPSPWQFIKEN. Residues 17–35 traverse the membrane as a helical segment; it reads IPLLMVALVLALLLRFFVA. The Periplasmic portion of the chain corresponds to 36–196; sequence EPRYIPSDSM…FVPARTIINT (161 aa). Catalysis depends on residues Ser-44 and Lys-94.

The protein belongs to the peptidase S26 family.

The protein resides in the cell membrane. The catalysed reaction is Cleavage of hydrophobic, N-terminal signal or leader sequences from secreted and periplasmic proteins.. This Synechocystis sp. (strain ATCC 27184 / PCC 6803 / Kazusa) protein is Probable signal peptidase I-1 (lepB1).